We begin with the raw amino-acid sequence, 387 residues long: Anhydro-N-acetylmuramic acid kinase (387 aa).

Residue 17 to 24 (GTSMDGVD) coordinates ATP.

It belongs to the anhydro-N-acetylmuramic acid kinase family.

It catalyses the reaction 1,6-anhydro-N-acetyl-beta-muramate + ATP + H2O = N-acetyl-D-muramate 6-phosphate + ADP + H(+). Its pathway is amino-sugar metabolism; 1,6-anhydro-N-acetylmuramate degradation. It functions in the pathway cell wall biogenesis; peptidoglycan recycling. Catalyzes the specific phosphorylation of 1,6-anhydro-N-acetylmuramic acid (anhMurNAc) with the simultaneous cleavage of the 1,6-anhydro ring, generating MurNAc-6-P. Is required for the utilization of anhMurNAc either imported from the medium or derived from its own cell wall murein, and thus plays a role in cell wall recycling. The chain is Anhydro-N-acetylmuramic acid kinase from Burkholderia mallei (strain ATCC 23344).